The chain runs to 279 residues: Urease accessory protein UreD (279 aa).

It belongs to the UreD family. UreD, UreF and UreG form a complex that acts as a GTP-hydrolysis-dependent molecular chaperone, activating the urease apoprotein by helping to assemble the nickel containing metallocenter of UreC. The UreE protein probably delivers the nickel.

It localises to the cytoplasm. Functionally, required for maturation of urease via the functional incorporation of the urease nickel metallocenter. The polypeptide is Urease accessory protein UreD (Trichodesmium erythraeum (strain IMS101)).